A 379-amino-acid chain; its full sequence is L-lactate dehydrogenase (379 aa).

One can recognise an FMN hydroxy acid dehydrogenase domain in the interval 1–379; it reads MIISASTDYR…LSRDSLVKIP (379 aa). Residue tyrosine 24 coordinates substrate. FMN is bound by residues serine 106 and glutamine 127. Tyrosine 129 lines the substrate pocket. Threonine 155 contributes to the FMN binding site. Arginine 164 provides a ligand contact to substrate. Position 251 (lysine 251) interacts with FMN. Histidine 275 (proton acceptor) is an active-site residue. Position 278 (arginine 278) interacts with substrate. 306–330 contacts FMN; it reads DSGIRTGLDVVRMLALGADCTLLGR.

This sequence belongs to the FMN-dependent alpha-hydroxy acid dehydrogenase family. It depends on FMN as a cofactor.

The protein localises to the cell inner membrane. It catalyses the reaction (S)-lactate + A = pyruvate + AH2. In terms of biological role, catalyzes the conversion of L-lactate to pyruvate. Is coupled to the respiratory chain. This is L-lactate dehydrogenase from Vibrio parahaemolyticus serotype O3:K6 (strain RIMD 2210633).